The sequence spans 622 residues: Deoxynucleoside triphosphate triphosphohydrolase SAMHD1 (622 aa).

An SAM domain is found at tryptophan 26–isoleucine 89. Lysine 95 and valine 96 together coordinate GTP. Residue asparagine 98 coordinates dGTP. GTP contacts are provided by aspartate 116, glutamine 121, and arginine 124. Residues glutamine 128, leucine 129, valine 135, and arginine 143 each coordinate dGTP. Residue glutamine 128 coordinates dATP. Residue glutamine 128 participates in dCTP binding. Residue glutamine 128 participates in dTTP binding. Position 143 (arginine 143) interacts with dATP. Arginine 143 provides a ligand contact to dCTP. Position 143 (arginine 143) interacts with dTTP. Positions arginine 143–phenylalanine 296 constitute an HD domain. Mn(2+) contacts are provided by histidine 146, histidine 185, and aspartate 186. The dATP site is built by histidine 189 and histidine 194. DCTP-binding residues include histidine 189 and histidine 194. DTTP-binding residues include histidine 189 and histidine 194. Residue histidine 212 is part of the active site. Position 291 (aspartate 291) interacts with Mn(2+). DGTP contacts are provided by lysine 292, tyrosine 295, aspartate 299, arginine 313, arginine 332, lysine 334, asparagine 338, arginine 346, tyrosine 354, glutamine 355, histidine 356, and lysine 357. 3 residues coordinate dATP: lysine 292, tyrosine 295, and aspartate 299. Residues lysine 292, tyrosine 295, and aspartate 299 each coordinate dCTP. 3 residues coordinate dTTP: lysine 292, tyrosine 295, and aspartate 299. Arginine 346 contributes to the dATP binding site. Residue arginine 346 coordinates dCTP. Glutamine 355 is a dATP binding site. DCTP is bound at residue glutamine 355. Residue glutamine 355 coordinates dTTP. Residues arginine 431, lysine 435, and lysine 502 each contribute to the GTP site. Lysine 502 lines the dGTP pocket. Residues threonine 571 to leucine 622 are disordered. Residues asparagine 594 to glycine 606 are compositionally biased toward polar residues.

Belongs to the SAMHD1 family. As to quaternary structure, homodimer; in absence of GTP and dNTP. Homotetramer; in GTP- and dNTP-bound form. Interacts with rbbp8/CtIP. Zn(2+) is required as a cofactor.

It localises to the nucleus. Its subcellular location is the chromosome. It catalyses the reaction a 2'-deoxyribonucleoside 5'-triphosphate + H2O = a 2'-deoxyribonucleoside + triphosphate + H(+). The catalysed reaction is dATP + H2O = 2'-deoxyadenosine + triphosphate + H(+). The enzyme catalyses dCTP + H2O = 2'-deoxycytidine + triphosphate + H(+). It carries out the reaction dGTP + H2O = 2'-deoxyguanosine + triphosphate + H(+). It catalyses the reaction dTTP + H2O = thymidine + triphosphate + H(+). Its activity is regulated as follows. Allosterically activated and regulated via the combined actions of GTP and dNTPs (dATP, dGTP, dTTP and dCTP): Allosteric site 1 binds GTP, while allosteric site 2 binds dNTP. Allosteric activation promotes the formation of highly active homotetramers. Its function is as follows. Protein that acts both as a host restriction factor involved in defense response to virus and as a regulator of DNA end resection at stalled replication forks. Has deoxynucleoside triphosphate (dNTPase) activity, which is required to restrict infection by viruses: dNTPase activity reduces cellular dNTP levels to levels too low for retroviral reverse transcription to occur, blocking early-stage virus replication in dendritic and other myeloid cells. Functions during S phase at stalled DNA replication forks to promote the resection of gapped or reversed forks: acts by stimulating the exonuclease activity of MRE11, activating the ATR-CHK1 pathway and allowing the forks to restart replication. Its ability to promote degradation of nascent DNA at stalled replication forks is required to prevent induction of type I interferons, thereby preventing chronic inflammation. Ability to promote DNA end resection at stalled replication forks is independent of dNTPase activity. The sequence is that of Deoxynucleoside triphosphate triphosphohydrolase SAMHD1 from Danio rerio (Zebrafish).